Here is a 325-residue protein sequence, read N- to C-terminus: Heat-inducible transcription repressor HrcA (325 aa).

It belongs to the HrcA family.

Negative regulator of class I heat shock genes (grpE-dnaK-dnaJ and groELS operons). Prevents heat-shock induction of these operons. In Staphylococcus aureus (strain JH1), this protein is Heat-inducible transcription repressor HrcA.